We begin with the raw amino-acid sequence, 204 residues long: Dephospho-CoA kinase (204 aa).

The 198-residue stretch at 3–200 folds into the DPCK domain; the sequence is VVAITGGIGS…ETYMAFASQQ (198 aa). An ATP-binding site is contributed by 11-16; the sequence is GSGKTT.

This sequence belongs to the CoaE family.

The protein localises to the cytoplasm. It catalyses the reaction 3'-dephospho-CoA + ATP = ADP + CoA + H(+). Its pathway is cofactor biosynthesis; coenzyme A biosynthesis; CoA from (R)-pantothenate: step 5/5. Its function is as follows. Catalyzes the phosphorylation of the 3'-hydroxyl group of dephosphocoenzyme A to form coenzyme A. This is Dephospho-CoA kinase from Aeromonas hydrophila.